Reading from the N-terminus, the 310-residue chain is uncharacterized protein (310 aa).

Over residues 1–11 (MKVKSILKHSR) the composition is skewed to basic residues. Disordered regions lie at residues 1 to 227 (MKVK…SDHA) and 242 to 310 (AMEE…NENE). The span at 12–50 (MSSPSLETDSMESGQQQNMVSSTPSIDMNESDCSGTGTP) shows a compositional bias: polar residues. The span at 51 to 80 (SEERIRRLRWDEENLSKAEQQKSAKMKITE) shows a compositional bias: basic and acidic residues. Positions 91–105 (PDDEVPEINLDETDS) are enriched in acidic residues. Positions 110–121 (TAGTLGDTLGTL) are enriched in low complexity. 2 stretches are compositionally biased toward basic and acidic residues: residues 126–150 (VSKD…KKEP) and 182–195 (LPSK…ETKP). Positions 242-253 (AMEEEALSEAEE) are enriched in acidic residues. A compositionally biased stretch (basic and acidic residues) spans 254 to 265 (NIPKKKPDFNEL). A Phosphoserine modification is found at Ser-285. Over residues 297 to 310 (DSGSASDVNMNENE) the composition is skewed to polar residues.

This is an uncharacterized protein from Schizosaccharomyces pombe (strain 972 / ATCC 24843) (Fission yeast).